Consider the following 210-residue polypeptide: MVEKQIAARGIQDPRVLEAMGKVPRERFVSEHIAPLAYEDRPLSIDEGQTISQPFIVAVMAQQAQITPQDKVLEIGTGSGYSAAILSQLASHVYSMERYPKLAELAKKRLQEFGYNNVTVSVGDGSLGWEEFAPYEVIIVTAGGPQIPPSLLKQLAISGRLVIPVGPSLESQQLMRVMREDADHYRYENLGSVQFVPLVGKEGWQTTSSS.

Ser-52 is an active-site residue.

This sequence belongs to the methyltransferase superfamily. L-isoaspartyl/D-aspartyl protein methyltransferase family.

The protein localises to the cytoplasm. The enzyme catalyses [protein]-L-isoaspartate + S-adenosyl-L-methionine = [protein]-L-isoaspartate alpha-methyl ester + S-adenosyl-L-homocysteine. Catalyzes the methyl esterification of L-isoaspartyl residues in peptides and proteins that result from spontaneous decomposition of normal L-aspartyl and L-asparaginyl residues. It plays a role in the repair and/or degradation of damaged proteins. In Protochlamydia amoebophila (strain UWE25), this protein is Protein-L-isoaspartate O-methyltransferase.